The chain runs to 144 residues: Large ribosomal subunit protein uL16 (144 aa).

The protein belongs to the universal ribosomal protein uL16 family. In terms of assembly, part of the 50S ribosomal subunit.

Functionally, binds 23S rRNA and is also seen to make contacts with the A and possibly P site tRNAs. The protein is Large ribosomal subunit protein uL16 of Enterococcus faecalis (strain ATCC 700802 / V583).